A 332-amino-acid polypeptide reads, in one-letter code: Glycerol-3-phosphate dehydrogenase [NAD(P)+] (332 aa).

NADPH-binding residues include S11, F12, K32, and K106. K106, G137, and S139 together coordinate sn-glycerol 3-phosphate. A141 contacts NADPH. Positions 192, 245, 255, 256, and 257 each coordinate sn-glycerol 3-phosphate. K192 serves as the catalytic Proton acceptor. R256 provides a ligand contact to NADPH. Residues V280 and E282 each contribute to the NADPH site.

Belongs to the NAD-dependent glycerol-3-phosphate dehydrogenase family.

Its subcellular location is the cytoplasm. It catalyses the reaction sn-glycerol 3-phosphate + NAD(+) = dihydroxyacetone phosphate + NADH + H(+). The catalysed reaction is sn-glycerol 3-phosphate + NADP(+) = dihydroxyacetone phosphate + NADPH + H(+). It participates in membrane lipid metabolism; glycerophospholipid metabolism. Catalyzes the reduction of the glycolytic intermediate dihydroxyacetone phosphate (DHAP) to sn-glycerol 3-phosphate (G3P), the key precursor for phospholipid synthesis. This chain is Glycerol-3-phosphate dehydrogenase [NAD(P)+], found in Staphylococcus saprophyticus subsp. saprophyticus (strain ATCC 15305 / DSM 20229 / NCIMB 8711 / NCTC 7292 / S-41).